Here is a 190-residue protein sequence, read N- to C-terminus: CASP-like protein 1E2 (190 aa).

The segment covering 1 to 12 has biased composition (low complexity); the sequence is MENEGKNNMNGM. Positions 1-24 are disordered; it reads MENEGKNNMNGMEMEKGKRESRSR. The Cytoplasmic portion of the chain corresponds to 1 to 28; the sequence is MENEGKNNMNGMEMEKGKRESRSRKGVE. Residues 13 to 24 show a composition bias toward basic and acidic residues; sequence EMEKGKRESRSR. The chain crosses the membrane as a helical span at residues 29–49; it reads LTMRVLALVLTMAAATVLGVA. Over 50-83 the chain is Extracellular; it reads KQTKVVSIKLIPALPPLDITTTAKASYLSAFVYN. The chain crosses the membrane as a helical span at residues 84-104; that stretch reads ISANAIACGYTAISIAILMIS. At 105–111 the chain is on the cytoplasmic side; the sequence is RGRRSKK. The helical transmembrane segment at 112–132 threads the bilayer; sequence LLMAVLLGDLVMVALLFSGTG. Topologically, residues 133-163 are extracellular; it reads AASAIGLMGLQGNKHVMWNKVCGVFGKFCHR. A helical membrane pass occupies residues 164–184; that stretch reads AAPSLPLTFLAAVVFMFLVVL. Over 185-190 the chain is Cytoplasmic; sequence DAIKLP.

It belongs to the Casparian strip membrane proteins (CASP) family. In terms of assembly, homodimer and heterodimers.

Its subcellular location is the cell membrane. The polypeptide is CASP-like protein 1E2 (Arabidopsis lyrata subsp. lyrata (Lyre-leaved rock-cress)).